Consider the following 501-residue polypeptide: Nucleic-acid-binding protein from transposon X-element (501 aa).

Disordered regions lie at residues 20–71 (SSPQ…GNSN) and 105–128 (AAAK…SKPP). A CCHC-type zinc finger spans residues 285–302 (VQCHRCQQIGHTAKYCRK). 2 disordered regions span residues 353–385 (RPRS…SRGG) and 400–443 (QPMS…TDAS). The span at 407 to 422 (QQQKQKQQPYDGSPSR) shows a compositional bias: low complexity. The span at 434–443 (GTLQRSTDAS) shows a compositional bias: polar residues.

The protein localises to the virion. Strongly basic protein that binds directly to retroviral RNA and may be involved in its packaging and in the reverse transcription process. The sequence is that of Nucleic-acid-binding protein from transposon X-element from Drosophila melanogaster (Fruit fly).